A 492-amino-acid polypeptide reads, in one-letter code: Glutamyl-tRNA(Gln) amidotransferase subunit A (492 aa).

Residues Lys78 and Ser158 each act as charge relay system in the active site. The Acyl-ester intermediate role is filled by Ser182.

It belongs to the amidase family. GatA subfamily. In terms of assembly, heterotrimer of A, B and C subunits.

The catalysed reaction is L-glutamyl-tRNA(Gln) + L-glutamine + ATP + H2O = L-glutaminyl-tRNA(Gln) + L-glutamate + ADP + phosphate + H(+). Allows the formation of correctly charged Gln-tRNA(Gln) through the transamidation of misacylated Glu-tRNA(Gln) in organisms which lack glutaminyl-tRNA synthetase. The reaction takes place in the presence of glutamine and ATP through an activated gamma-phospho-Glu-tRNA(Gln). This chain is Glutamyl-tRNA(Gln) amidotransferase subunit A, found in Parvibaculum lavamentivorans (strain DS-1 / DSM 13023 / NCIMB 13966).